A 393-amino-acid chain; its full sequence is tRNA(Met) cytidine acetate ligase (393 aa).

ATP-binding residues include G81, N142, and R167.

Belongs to the TmcAL family.

It is found in the cytoplasm. The enzyme catalyses cytidine(34) in elongator tRNA(Met) + acetate + ATP = N(4)-acetylcytidine(34) in elongator tRNA(Met) + AMP + diphosphate. Functionally, catalyzes the formation of N(4)-acetylcytidine (ac(4)C) at the wobble position of elongator tRNA(Met), using acetate and ATP as substrates. First activates an acetate ion to form acetyladenylate (Ac-AMP) and then transfers the acetyl group to tRNA to form ac(4)C34. This chain is tRNA(Met) cytidine acetate ligase, found in Bacillus cereus (strain AH187).